The primary structure comprises 284 residues: Sulfotransferase 4A1 (284 aa).

Thr8, Thr11, and Thr205 each carry phosphothreonine.

The protein belongs to the sulfotransferase 1 family. In terms of tissue distribution, highly expressed in the cerebral cortex and frontal lobe, slightly less in the cerebellum, occipital and temporal lobes, relatively low in the medulla and putamen, and lowest in the spinal cord. No expression detected in the pancreas. Highly expressed in fetal brain and occipital lobe, slightly less in the whole brain, frontal lobe, hippocampus, and lung, very low expression in cerebellum, medulla oblongata, temporal lobe, testis, kidney and appendix.

It is found in the cytoplasm. In terms of biological role, atypical sulfotransferase family member with very low affinity for 3'-phospho-5'-adenylyl sulfate (PAPS) and very low catalytic activity towards L-triiodothyronine, thyroxine, estrone, p-nitrophenol, 2-naphthylamine, and 2-beta-naphthol. May have a role in the metabolism of drugs and neurotransmitters in the CNS. The protein is Sulfotransferase 4A1 (SULT4A1) of Homo sapiens (Human).